A 175-amino-acid polypeptide reads, in one-letter code: DELTA-stichotoxin-She4b (175 aa).

The tract at residues Ala-1–Ala-10 is plays an important role in the hemolytic activity. An N-terminal region region spans residues Gly-9–Ser-28. Phosphocholine-binding residues include Ser-52, Val-85, Ser-103, Pro-105, Tyr-131, Tyr-135, and Tyr-136. The tract at residues Ser-103–Lys-118 is trp-rich region, which is important for the binding to lipid membrane. The short motif at Arg-141 to Asp-143 is the Cell attachment site, crucial for protein stability element.

In terms of assembly, octamer or nonamer in membranes. Monomer in the soluble state. Originally described as forming tetramer in the presence of a lipidic interface. Expressed in tentacles and mesenteric filaments.

The protein localises to the secreted. The protein resides in the nematocyst. It localises to the target cell membrane. In terms of biological role, pore-forming protein that forms cations-selective hydrophilic pores of around 1 nm and causes cardiac stimulation and cytolysis. Pore formation is a multi-step process that involves specific recognition of membrane sphingomyelin (but neither cholesterol nor phosphatidylcholine) using aromatic rich region and adjacent phosphocholine (POC) binding site, firm binding to the membrane (mainly driven by hydrophobic interactions) accompanied by the transfer of the N-terminal region to the lipid-water interface and finally pore formation after oligomerization of monomers. Cytolytic effects include red blood cells hemolysis, platelet aggregation and lysis, cytotoxic and cytostatic effects on fibroblasts. Lethality in mammals has been ascribed to severe vasospasm of coronary vessels, cardiac arrhythmia, and inotropic effects. This chain is DELTA-stichotoxin-She4b, found in Stichodactyla helianthus (Sun anemone).